A 392-amino-acid polypeptide reads, in one-letter code: uncharacterized protein (392 aa).

The protein belongs to the hcp1 family.

This is an uncharacterized protein from Escherichia coli (strain K12).